Here is a 446-residue protein sequence, read N- to C-terminus: Maltoporin (446 aa).

Residues 1–25 (MMITLRKLPLAVAVAAGVMSAQAMA) form the signal peptide.

This sequence belongs to the porin LamB (TC 1.B.3) family. As to quaternary structure, homotrimer formed of three 18-stranded antiparallel beta-barrels, containing three independent channels.

The protein resides in the cell outer membrane. It catalyses the reaction beta-maltose(in) = beta-maltose(out). Functionally, involved in the transport of maltose and maltodextrins. The polypeptide is Maltoporin (Escherichia coli O7:K1 (strain IAI39 / ExPEC)).